Here is a 141-residue protein sequence, read N- to C-terminus: MNKPYTKPDYEQELRRAGVRITRPRRIILNILNETEDHPDALEIFRRAVEEDDSISLSTVYRTMKLLEERGAIHRHAFAGGPSRFEQASGAHHDHIIDMDSGDVVEFHSDKIEKLQEEIARSLGFEIVHHRLELYCKKLKS.

The interval 1–89 (MNKPYTKPDY…GGPSRFEQAS (89 aa)) is DNA-binding. The Zn(2+) site is built by H38 and E86. The interval 90–141 (GAHHDHIIDMDSGDVVEFHSDKIEKLQEEIARSLGFEIVHHRLELYCKKLKS) is dimerization. Fe cation-binding residues include H92 and D94. The Zn(2+) site is built by H95 and E106. 2 residues coordinate Fe cation: E113 and H130.

The protein belongs to the Fur family. In terms of assembly, homodimer.

Its subcellular location is the cytoplasm. Acts as a global negative controlling element, employing Fe(2+) as a cofactor to bind the operator of the repressed genes. The sequence is that of Ferric uptake regulation protein (fur) from Brucella abortus (strain 2308).